The primary structure comprises 316 residues: GTP cyclohydrolase FolE2 2 (316 aa).

It belongs to the GTP cyclohydrolase IV family.

It catalyses the reaction GTP + H2O = 7,8-dihydroneopterin 3'-triphosphate + formate + H(+). Its pathway is cofactor biosynthesis; 7,8-dihydroneopterin triphosphate biosynthesis; 7,8-dihydroneopterin triphosphate from GTP: step 1/1. Its function is as follows. Converts GTP to 7,8-dihydroneopterin triphosphate. This chain is GTP cyclohydrolase FolE2 2, found in Burkholderia orbicola (strain MC0-3).